The primary structure comprises 192 residues: NADH dehydrogenase [ubiquinone] iron-sulfur protein 3 (192 aa).

It belongs to the complex I 30 kDa subunit family. Complex I is composed of about 45 different subunits. This is a component of the iron-sulfur (IP) fragment of the enzyme.

The protein localises to the mitochondrion inner membrane. The catalysed reaction is a ubiquinone + NADH + 5 H(+)(in) = a ubiquinol + NAD(+) + 4 H(+)(out). Core subunit of the mitochondrial membrane respiratory chain NADH dehydrogenase (Complex I) that is believed to belong to the minimal assembly required for catalysis. Complex I functions in the transfer of electrons from NADH to the respiratory chain. The immediate electron acceptor for the enzyme is believed to be ubiquinone. This is NADH dehydrogenase [ubiquinone] iron-sulfur protein 3 (NAD9) from Beta vulgaris (Sugar beet).